The primary structure comprises 640 residues: SUMO-activating enzyme subunit 2 (640 aa).

ATP is bound by residues 24–29, D48, 56–59, K72, 95–96, and 117–122; these read GAGGIG, NLNR, SI, and DNRAAR. Residues C158 and C161 each contribute to the Zn(2+) site. K164 participates in a covalent cross-link: Glycyl lysine isopeptide (Lys-Gly) (interchain with G-Cter in SUMO1). The active-site Glycyl thioester intermediate is C173. K190 participates in a covalent cross-link: Glycyl lysine isopeptide (Lys-Gly) (interchain with G-Cter in SUMO). The disordered stretch occupies residues 202–231; that stretch reads ADQEVSPDRADPEAAWEPTEAEARARASNE. S207 is subject to Phosphoserine. Basic and acidic residues predominate over residues 222–231; sequence AEARARASNE. Residue K236 forms a Glycyl lysine isopeptide (Lys-Gly) (interchain with G-Cter in SUMO1); alternate linkage. Glycyl lysine isopeptide (Lys-Gly) (interchain with G-Cter in SUMO2); alternate cross-links involve residues K236 and K257. Glycyl lysine isopeptide (Lys-Gly) (interchain with G-Cter in SUMO); alternate cross-links involve residues K257 and K271. K271 carries the post-translational modification N6-acetyllysine; alternate. K275 participates in a covalent cross-link: Glycyl lysine isopeptide (Lys-Gly) (interchain with G-Cter in SUMO). K371 is covalently cross-linked (Glycyl lysine isopeptide (Lys-Gly) (interchain with G-Cter in SUMO2)). A Glycyl lysine isopeptide (Lys-Gly) (interchain with G-Cter in SUMO1); alternate cross-link involves residue K420. K420 participates in a covalent cross-link: Glycyl lysine isopeptide (Lys-Gly) (interchain with G-Cter in SUMO2); alternate. Zn(2+) is bound by residues C441 and C444. Residue S507 is modified to Phosphoserine. A Glycyl lysine isopeptide (Lys-Gly) (interchain with G-Cter in SUMO2) cross-link involves residue K540. Residues 551-563 are compositionally biased toward basic and acidic residues; it reads PEKVGPKQAEDAA. The disordered stretch occupies residues 551-640; sequence PEKVGPKQAE…EELDDVIALD (90 aa). Polar residues predominate over residues 565-582; it reads SITNGSDDGAQPSTSTAQ. Residues 583 to 597 are compositionally biased toward acidic residues; sequence EQDDVLIVDSDEEDS. S592 carries the phosphoserine modification. A compositionally biased stretch (basic and acidic residues) spans 606-630; that stretch reads EERSRKRKLDEKENLSAKRSRIEQK. Residue K611 forms a Glycyl lysine isopeptide (Lys-Gly) (interchain with G-Cter in SUMO) linkage. Residue K613 forms a Glycyl lysine isopeptide (Lys-Gly) (interchain with G-Cter in SUMO); alternate linkage. K613 is modified (N6-acetyllysine; alternate). Residues K617 and K623 each participate in a glycyl lysine isopeptide (Lys-Gly) (interchain with G-Cter in SUMO) cross-link. Residues 631–640 are compositionally biased toward acidic residues; that stretch reads EELDDVIALD.

This sequence belongs to the ubiquitin-activating E1 family. Heterodimer of SAE1 and UBA2/SAE2. The heterodimer corresponds to the two domains that are encoded on a single polypeptide chain in ubiquitin-activating enzyme E1. Interacts with UBE2I. Post-translationally, sumoylated with SUMO1 and SUMO2/3 and by UBC9. Sumoylation at Lys-236 inhibits enzymatic activity. Sumoylation at the C-terminal lysine cluster plays an essential role in nuclear trafficking.

It is found in the cytoplasm. It localises to the nucleus. The protein operates within protein modification; protein sumoylation. Functionally, the heterodimer acts as an E1 ligase for SUMO1, SUMO2, SUMO3, and probably SUMO4. It mediates ATP-dependent activation of SUMO proteins followed by formation of a thioester bond between a SUMO protein and a conserved active site cysteine residue on UBA2/SAE2. The protein is SUMO-activating enzyme subunit 2 (UBA2) of Homo sapiens (Human).